The primary structure comprises 409 residues: NADH-quinone oxidoreductase subunit D (409 aa).

It belongs to the complex I 49 kDa subunit family. As to quaternary structure, NDH-1 is composed of 14 different subunits. Subunits NuoB, C, D, E, F, and G constitute the peripheral sector of the complex.

The protein localises to the cell inner membrane. The catalysed reaction is a quinone + NADH + 5 H(+)(in) = a quinol + NAD(+) + 4 H(+)(out). Functionally, NDH-1 shuttles electrons from NADH, via FMN and iron-sulfur (Fe-S) centers, to quinones in the respiratory chain. The immediate electron acceptor for the enzyme in this species is believed to be ubiquinone. Couples the redox reaction to proton translocation (for every two electrons transferred, four hydrogen ions are translocated across the cytoplasmic membrane), and thus conserves the redox energy in a proton gradient. The sequence is that of NADH-quinone oxidoreductase subunit D from Helicobacter pylori (strain P12).